The primary structure comprises 52 residues: Insulin (52 aa).

3 disulfides stabilise this stretch: Cys-7–Cys-38, Cys-19–Cys-51, and Cys-37–Cys-42.

It belongs to the insulin family. Heterodimer of a B chain and an A chain linked by two disulfide bonds.

It is found in the secreted. Insulin decreases blood glucose concentration. It increases cell permeability to monosaccharides, amino acids and fatty acids. It accelerates glycolysis, the pentose phosphate cycle, and glycogen synthesis in liver. The polypeptide is Insulin (ins) (Acipenser gueldenstaedtii (Russian sturgeon)).